Reading from the N-terminus, the 96-residue chain is Aspartyl/glutamyl-tRNA(Asn/Gln) amidotransferase subunit C (96 aa).

It belongs to the GatC family. As to quaternary structure, heterotrimer of A, B and C subunits.

It carries out the reaction L-glutamyl-tRNA(Gln) + L-glutamine + ATP + H2O = L-glutaminyl-tRNA(Gln) + L-glutamate + ADP + phosphate + H(+). The enzyme catalyses L-aspartyl-tRNA(Asn) + L-glutamine + ATP + H2O = L-asparaginyl-tRNA(Asn) + L-glutamate + ADP + phosphate + 2 H(+). Its function is as follows. Allows the formation of correctly charged Asn-tRNA(Asn) or Gln-tRNA(Gln) through the transamidation of misacylated Asp-tRNA(Asn) or Glu-tRNA(Gln) in organisms which lack either or both of asparaginyl-tRNA or glutaminyl-tRNA synthetases. The reaction takes place in the presence of glutamine and ATP through an activated phospho-Asp-tRNA(Asn) or phospho-Glu-tRNA(Gln). This chain is Aspartyl/glutamyl-tRNA(Asn/Gln) amidotransferase subunit C, found in Trichormus variabilis (strain ATCC 29413 / PCC 7937) (Anabaena variabilis).